Here is a 296-residue protein sequence, read N- to C-terminus: MSAGDPRVGSGSLDSFMFSIPLVALNVGVRRRLSLFLNPRTPVAADWTLLAEEMGFEYLEIRELETRPDPTRSLLDAWQGRSGASVGRLLELLALLDREDILKELKSRIEEDCQKYLGKQQNQESEKPLQVARVESSVPQTKELGGITTLDDPLGQTPELFDAFICYCPNDIEFVQEMIRQLEQTDYRLKLCVSDRDVLPGTCVWSIASELIEKRCRRMVVVVSDDYLQSKECDFQTKFALSLSPGVQQKRLIPIKYKAMKKDFPSILRFITICDYTNPCTKSWFWTRLAKALSLP.

Residues 54 to 109 (MGFEYLEIRELETRPDPTRSLLDAWQGRSGASVGRLLELLALLDREDILKELKSRI) form the Death domain. Positions 110 to 155 (EEDCQKYLGKQQNQESEKPLQVARVESSVPQTKELGGITTLDDPLG) are intermediate domain. A TIR domain is found at 159-293 (ELFDAFICYC…WFWTRLAKAL (135 aa)). Ser-244 is subject to Phosphoserine.

Homodimer. Also forms heterodimers with TIRAP. Binds to TLR2, TLR4, IRAK1, IRAK2 and IRAK4 via their respective TIR domains. Interacts with IL18R1. Interacts with BMX, IL1RL1, IKBKE and IRF7. Interacts with LRRFIP1 and LRRFIP2; this interaction positively regulates Toll-like receptor (TLR) signaling in response to agonist. Interacts with FLII. LRRFIP1 and LRRFIP2 compete with FLII for MYD88-binding. Interacts with IRF1. Upon IL1B treatment, forms a complex with PELI1, IRAK1, IRAK4 and TRAF6; this complex recruits MAP3K7/TAK1, TAB1 and TAB2 to mediate NF-kappa-B activation. Direct binding of SMAD6 to PELI1 prevents the complex formation and hence negatively regulates IL1R-TLR signaling and eventually NF-kappa-B-mediated gene expression. May interact with PIK3AP1. Interacts (via TIR domain) with DHX9 (via H2A and OB-fold regions); this interaction is direct. Interacts with OTUD4 deubiquitinase; the interaction is direct. Post-translationally, ubiquitinated; undergoes 'Lys-63'-linked polyubiquitination. OTUD4 specifically hydrolyzes 'Lys-63'-linked polyubiquitinated MYD88. Deubiquitinated by USP3 that cleaves 'Lys-63'-linked ubiquitin chains leading to inhibition of MYD88-induced NF-kappa-B signaling. In terms of tissue distribution, detected in bone marrow. Isoform 1 is expressed in testis, kidney, lung, ovary, adrenal gland, provstate, thymus and heart, and weakly in skeletal muscle, liver, spleen and brain. Isoform 2 is mainly expressed in the spleen and weakly in brain.

Its subcellular location is the cytoplasm. The protein resides in the nucleus. Adapter protein involved in the Toll-like receptor and IL-1 receptor signaling pathway in the innate immune response. Acts via IRAK1, IRAK2, IRF7 and TRAF6, leading to NF-kappa-B activation, cytokine secretion and the inflammatory response. Increases IL-8 transcription. Involved in IL-18-mediated signaling pathway. Activates IRF1 resulting in its rapid migration into the nucleus to mediate an efficient induction of IFN-beta, NOS2/INOS, and IL12A genes. Upon TLR8 activation by GU-rich single-stranded RNA (GU-rich RNA) derived from viruses, induces IL1B release through NLRP3 inflammasome activation. MyD88-mediated signaling in intestinal epithelial cells is crucial for maintenance of gut homeostasis and controls the expression of the antimicrobial lectin REG3G in the small intestine. Mediates leukocyte recruitment at the inflammatory site. Functionally, defective in its ability to induce IRAK phosphorylation and NF-kappa-B activation and can function as a negative regulator of activation by IL-1 or lipopolysaccharide (LPS). This Mus musculus (Mouse) protein is Myeloid differentiation primary response protein MyD88.